A 524-amino-acid chain; its full sequence is Light-independent protochlorophyllide reductase subunit B (524 aa).

Residue D36 participates in [4Fe-4S] cluster binding. D290 acts as the Proton donor in catalysis. Residue 425–426 (GL) coordinates substrate.

The protein belongs to the ChlB/BchB/BchZ family. In terms of assembly, protochlorophyllide reductase is composed of three subunits; ChlL, ChlN and ChlB. Forms a heterotetramer of two ChlB and two ChlN subunits. Requires [4Fe-4S] cluster as cofactor.

The catalysed reaction is chlorophyllide a + oxidized 2[4Fe-4S]-[ferredoxin] + 2 ADP + 2 phosphate = protochlorophyllide a + reduced 2[4Fe-4S]-[ferredoxin] + 2 ATP + 2 H2O. It functions in the pathway porphyrin-containing compound metabolism; chlorophyll biosynthesis (light-independent). In terms of biological role, component of the dark-operative protochlorophyllide reductase (DPOR) that uses Mg-ATP and reduced ferredoxin to reduce ring D of protochlorophyllide (Pchlide) to form chlorophyllide a (Chlide). This reaction is light-independent. The NB-protein (ChlN-ChlB) is the catalytic component of the complex. The protein is Light-independent protochlorophyllide reductase subunit B of Synechococcus sp. (strain CC9605).